The primary structure comprises 640 residues: 1-deoxy-D-xylulose-5-phosphate synthase (640 aa).

Residues H72 and 113 to 115 contribute to the thiamine diphosphate site; that span reads GHA. D144 is a binding site for Mg(2+). Thiamine diphosphate contacts are provided by residues 145–146, N174, Y287, and E370; that span reads GA. N174 serves as a coordination point for Mg(2+).

The protein belongs to the transketolase family. DXPS subfamily. As to quaternary structure, homodimer. The cofactor is Mg(2+). Thiamine diphosphate is required as a cofactor.

The enzyme catalyses D-glyceraldehyde 3-phosphate + pyruvate + H(+) = 1-deoxy-D-xylulose 5-phosphate + CO2. It participates in metabolic intermediate biosynthesis; 1-deoxy-D-xylulose 5-phosphate biosynthesis; 1-deoxy-D-xylulose 5-phosphate from D-glyceraldehyde 3-phosphate and pyruvate: step 1/1. In terms of biological role, catalyzes the acyloin condensation reaction between C atoms 2 and 3 of pyruvate and glyceraldehyde 3-phosphate to yield 1-deoxy-D-xylulose-5-phosphate (DXP). In Synechocystis sp. (strain ATCC 27184 / PCC 6803 / Kazusa), this protein is 1-deoxy-D-xylulose-5-phosphate synthase.